The following is a 200-amino-acid chain: Small ribosomal subunit protein uS4 (200 aa).

Residues Thr-22 to Lys-42 form a disordered region. Residues Ala-92–Lys-152 form the S4 RNA-binding domain.

This sequence belongs to the universal ribosomal protein uS4 family. In terms of assembly, part of the 30S ribosomal subunit. Contacts protein S5. The interaction surface between S4 and S5 is involved in control of translational fidelity.

In terms of biological role, one of the primary rRNA binding proteins, it binds directly to 16S rRNA where it nucleates assembly of the body of the 30S subunit. With S5 and S12 plays an important role in translational accuracy. The polypeptide is Small ribosomal subunit protein uS4 (Bacillus thuringiensis subsp. konkukian (strain 97-27)).